We begin with the raw amino-acid sequence, 94 residues long: CRISPR-associated endoribonuclease Cas2 1 (94 aa).

Aspartate 8 is a binding site for Mg(2+).

It belongs to the CRISPR-associated endoribonuclease Cas2 protein family. Homodimer, forms a heterotetramer with a Cas1 homodimer. Requires Mg(2+) as cofactor.

Its function is as follows. CRISPR (clustered regularly interspaced short palindromic repeat), is an adaptive immune system that provides protection against mobile genetic elements (viruses, transposable elements and conjugative plasmids). CRISPR clusters contain sequences complementary to antecedent mobile elements and target invading nucleic acids. CRISPR clusters are transcribed and processed into CRISPR RNA (crRNA). Involved in the integration of spacer DNA into the CRISPR cassette. Functions as a ssRNA-specific endoribonuclease. This is CRISPR-associated endoribonuclease Cas2 1 (cas21) from Archaeoglobus fulgidus (strain ATCC 49558 / DSM 4304 / JCM 9628 / NBRC 100126 / VC-16).